The sequence spans 311 residues: uncharacterized protein (311 aa).

Residues 1 to 13 form the signal peptide; sequence MLLSLIFPIAVLG. N-linked (GlcNAc...) asparagine glycosylation is present at N115.

It is found in the secreted. This is an uncharacterized protein from Encephalitozoon cuniculi (strain GB-M1) (Microsporidian parasite).